Consider the following 223-residue polypeptide: Na(+)-translocating NADH-quinone reductase subunit D (223 aa).

5 helical membrane passes run T42 to I62, I66 to V86, V103 to M123, F131 to I151, and N178 to L198.

This sequence belongs to the NqrDE/RnfAE family. Composed of six subunits; NqrA, NqrB, NqrC, NqrD, NqrE and NqrF.

It localises to the cell inner membrane. It catalyses the reaction a ubiquinone + n Na(+)(in) + NADH + H(+) = a ubiquinol + n Na(+)(out) + NAD(+). In terms of biological role, NQR complex catalyzes the reduction of ubiquinone-1 to ubiquinol by two successive reactions, coupled with the transport of Na(+) ions from the cytoplasm to the periplasm. NqrA to NqrE are probably involved in the second step, the conversion of ubisemiquinone to ubiquinol. The sequence is that of Na(+)-translocating NADH-quinone reductase subunit D from Pseudomonas paraeruginosa (strain DSM 24068 / PA7) (Pseudomonas aeruginosa (strain PA7)).